Consider the following 174-residue polypeptide: Guided entry of tail-anchored proteins factor 1 (174 aa).

Over 1–8 the chain is Lumenal; the sequence is MSSAAADH. A helical membrane pass occupies residues 9 to 29; it reads WAWLLVLSFVFGCNVLRVLLP. At 30–99 the chain is on the cytoplasmic side; sequence SFSSFMSRVL…VKARTAQLAK (70 aa). A coiled-coil region spans residues 39–94; sequence LQKDAEQESQMRAEIQDMKQELSTVNMMDEFARYARLERKINKMTDKLKTHVKART. Residues 39–97 are interaction with GET3/TRC40; that stretch reads LQKDAEQESQMRAEIQDMKQELSTVNMMDEFARYARLERKINKMTDKLKTHVKARTAQL. The helical transmembrane segment at 100-120 threads the bilayer; the sequence is IKWVISVAFYVLQAALMISLI. The Lumenal segment spans residues 121-148; the sequence is WKYYSVPVAVVPSKWITPLDRLVAFPTR. Residues 149–169 form a helical membrane-spanning segment; that stretch reads VAGGVGITCWILVCNKVVAIV. At 170 to 174 the chain is on the cytoplasmic side; that stretch reads LHPFS.

This sequence belongs to the WRB/GET1 family. In terms of assembly, component of the Golgi to ER traffic (GET) complex, which is composed of GET1/WRB, CAMLG/GET2 and GET3. Within the complex, GET1 and CAMLG form a heterotetramer which is stabilized by phosphatidylinositol binding and which binds to the GET3 homodimer. Interacts with CAMLG (via C-terminus). GET3 shows a higher affinity for CAMLG than for GET1.

It is found in the endoplasmic reticulum membrane. Functionally, required for the post-translational delivery of tail-anchored (TA) proteins to the endoplasmic reticulum. Together with CAMLG/GET2, acts as a membrane receptor for soluble GET3/TRC40, which recognizes and selectively binds the transmembrane domain of TA proteins in the cytosol. Required to ensure correct topology and ER insertion of CAMLG. This Pongo abelii (Sumatran orangutan) protein is Guided entry of tail-anchored proteins factor 1.